A 230-amino-acid polypeptide reads, in one-letter code: Cytidylate kinase (230 aa).

Residue 12 to 20 participates in ATP binding; that stretch reads GPSGAGKGT.

The protein belongs to the cytidylate kinase family. Type 1 subfamily.

Its subcellular location is the cytoplasm. The enzyme catalyses CMP + ATP = CDP + ADP. The catalysed reaction is dCMP + ATP = dCDP + ADP. In Shewanella sp. (strain W3-18-1), this protein is Cytidylate kinase.